Consider the following 508-residue polypeptide: Histidine--tRNA ligase, cytoplasmic (508 aa).

The WHEP-TRS domain occupies 3 to 59 (SPALEELVLNSRHRLVRGLKQQKASADQIEEEVAKLLKLKAQLGHDESKQKFVLKTP). S66 bears the Phosphoserine mark. L-histidine is bound by residues 130-132 (DLT), R157, D177, R326, and 330-331 (YY).

This sequence belongs to the class-II aminoacyl-tRNA synthetase family. Homodimer.

Its subcellular location is the cytoplasm. The catalysed reaction is tRNA(His) + L-histidine + ATP = L-histidyl-tRNA(His) + AMP + diphosphate + H(+). Its function is as follows. Catalyzes the ATP-dependent ligation of histidine to the 3'-end of its cognate tRNA, via the formation of an aminoacyl-adenylate intermediate (His-AMP). Plays a role in axon guidance. This Mesocricetus auratus (Golden hamster) protein is Histidine--tRNA ligase, cytoplasmic (HARS1).